The primary structure comprises 324 residues: Beta-ketoacyl-[acyl-carrier-protein] synthase III (324 aa).

Active-site residues include cysteine 112 and histidine 249. The interval 250–254 (QANDR) is ACP-binding. The active site involves asparagine 279.

This sequence belongs to the thiolase-like superfamily. FabH family. Homodimer.

The protein resides in the cytoplasm. It catalyses the reaction malonyl-[ACP] + acetyl-CoA + H(+) = 3-oxobutanoyl-[ACP] + CO2 + CoA. It functions in the pathway lipid metabolism; fatty acid biosynthesis. Functionally, catalyzes the condensation reaction of fatty acid synthesis by the addition to an acyl acceptor of two carbons from malonyl-ACP. Catalyzes the first condensation reaction which initiates fatty acid synthesis and may therefore play a role in governing the total rate of fatty acid production. Possesses both acetoacetyl-ACP synthase and acetyl transacylase activities. Its substrate specificity determines the biosynthesis of branched-chain and/or straight-chain of fatty acids. This Streptococcus gordonii (strain Challis / ATCC 35105 / BCRC 15272 / CH1 / DL1 / V288) protein is Beta-ketoacyl-[acyl-carrier-protein] synthase III.